The following is a 335-amino-acid chain: Holliday junction branch migration complex subunit RuvB (335 aa).

The large ATPase domain (RuvB-L) stretch occupies residues Ala4 to Tyr184. ATP is bound by residues Ile23, Arg24, Gly65, Lys68, Thr69, Thr70, Glu131–Tyr133, Arg174, Tyr184, and Arg221. Position 69 (Thr69) interacts with Mg(2+). The tract at residues Ser185 to Asp255 is small ATPAse domain (RuvB-S). Residues Asp258–Asp335 form a head domain (RuvB-H) region. DNA is bound by residues Arg294, Arg313, and Arg318.

The protein belongs to the RuvB family. Homohexamer. Forms an RuvA(8)-RuvB(12)-Holliday junction (HJ) complex. HJ DNA is sandwiched between 2 RuvA tetramers; dsDNA enters through RuvA and exits via RuvB. An RuvB hexamer assembles on each DNA strand where it exits the tetramer. Each RuvB hexamer is contacted by two RuvA subunits (via domain III) on 2 adjacent RuvB subunits; this complex drives branch migration. In the full resolvosome a probable DNA-RuvA(4)-RuvB(12)-RuvC(2) complex forms which resolves the HJ.

It localises to the cytoplasm. The catalysed reaction is ATP + H2O = ADP + phosphate + H(+). Functionally, the RuvA-RuvB-RuvC complex processes Holliday junction (HJ) DNA during genetic recombination and DNA repair, while the RuvA-RuvB complex plays an important role in the rescue of blocked DNA replication forks via replication fork reversal (RFR). RuvA specifically binds to HJ cruciform DNA, conferring on it an open structure. The RuvB hexamer acts as an ATP-dependent pump, pulling dsDNA into and through the RuvAB complex. RuvB forms 2 homohexamers on either side of HJ DNA bound by 1 or 2 RuvA tetramers; 4 subunits per hexamer contact DNA at a time. Coordinated motions by a converter formed by DNA-disengaged RuvB subunits stimulates ATP hydrolysis and nucleotide exchange. Immobilization of the converter enables RuvB to convert the ATP-contained energy into a lever motion, pulling 2 nucleotides of DNA out of the RuvA tetramer per ATP hydrolyzed, thus driving DNA branch migration. The RuvB motors rotate together with the DNA substrate, which together with the progressing nucleotide cycle form the mechanistic basis for DNA recombination by continuous HJ branch migration. Branch migration allows RuvC to scan DNA until it finds its consensus sequence, where it cleaves and resolves cruciform DNA. This is Holliday junction branch migration complex subunit RuvB from Haemophilus influenzae (strain PittEE).